The sequence spans 576 residues: POU domain, class 6, transcription factor 1 (576 aa).

Residues 65–88 (PAEAGSCDPDHSAEATVAARSPSE) are disordered. Residues 414-488 (EDGINLEEIR…VLEKWLMEAE (75 aa)) form the POU-specific domain. Residues 509-568 (KRKRRTSFTPQAIEALNAYFEKNPLPTGQEITEIAKELNYDREVVRVWFCNRRQTLKNTS) constitute a DNA-binding region (homeobox).

The protein belongs to the POU transcription factor family. Class-6 subfamily. As to expression, isoform C1 and isoform C2 are found in the brain, while isoform C7 is found in the testis.

The protein resides in the nucleus. Transcription factor that binds preferentially to a variant of the octamer motif (5'-ATGATAAT-3'). The polypeptide is POU domain, class 6, transcription factor 1 (Pou6f1) (Mus musculus (Mouse)).